The sequence spans 200 residues: 3-isopropylmalate dehydratase small subunit (200 aa).

It belongs to the LeuD family. LeuD type 1 subfamily. Heterodimer of LeuC and LeuD.

The catalysed reaction is (2R,3S)-3-isopropylmalate = (2S)-2-isopropylmalate. The protein operates within amino-acid biosynthesis; L-leucine biosynthesis; L-leucine from 3-methyl-2-oxobutanoate: step 2/4. Functionally, catalyzes the isomerization between 2-isopropylmalate and 3-isopropylmalate, via the formation of 2-isopropylmaleate. This chain is 3-isopropylmalate dehydratase small subunit, found in Haemophilus influenzae (strain 86-028NP).